Reading from the N-terminus, the 640-residue chain is Probable potassium transport system protein Kup 2 (640 aa).

Residues 1-20 are disordered; the sequence is MTADIAATPAETPATNGHGD. A run of 12 helical transmembrane segments spans residues 30–50, 71–91, 117–137, 155–175, 183–203, 224–244, 265–285, 294–314, 363–383, 385–405, 410–430, and 437–457; these read LTLG…LYAL, VVSL…VVIL, ASII…DAVI, AAFD…LFAV, VAAF…IAAF, FMLH…LAVT, WLFV…ALVI, PFFL…ATVA, LLLV…ALAS, YGIS…VVIW, WSPI…LTFL, and VLEG…LMYT.

Belongs to the HAK/KUP transporter (TC 2.A.72) family.

The protein resides in the cell inner membrane. The enzyme catalyses K(+)(in) + H(+)(in) = K(+)(out) + H(+)(out). Functionally, transport of potassium into the cell. Likely operates as a K(+):H(+) symporter. In Bradyrhizobium sp. (strain ORS 278), this protein is Probable potassium transport system protein Kup 2.